The chain runs to 156 residues: Small ribosomal subunit protein uS7 (156 aa).

It belongs to the universal ribosomal protein uS7 family. In terms of assembly, part of the 30S ribosomal subunit. Contacts proteins S9 and S11.

In terms of biological role, one of the primary rRNA binding proteins, it binds directly to 16S rRNA where it nucleates assembly of the head domain of the 30S subunit. Is located at the subunit interface close to the decoding center, probably blocks exit of the E-site tRNA. This chain is Small ribosomal subunit protein uS7, found in Rhodobacter capsulatus (Rhodopseudomonas capsulata).